Consider the following 545-residue polypeptide: Chaperonin GroEL (545 aa).

Residues 30–33 (TLGP), Lys-51, 87–91 (DGTTT), Gly-415, and Asp-495 contribute to the ATP site.

Belongs to the chaperonin (HSP60) family. Forms a cylinder of 14 subunits composed of two heptameric rings stacked back-to-back. Interacts with the co-chaperonin GroES.

The protein resides in the cytoplasm. The enzyme catalyses ATP + H2O + a folded polypeptide = ADP + phosphate + an unfolded polypeptide.. Its function is as follows. Together with its co-chaperonin GroES, plays an essential role in assisting protein folding. The GroEL-GroES system forms a nano-cage that allows encapsulation of the non-native substrate proteins and provides a physical environment optimized to promote and accelerate protein folding. The polypeptide is Chaperonin GroEL (Shewanella baltica (strain OS185)).